We begin with the raw amino-acid sequence, 219 residues long: Protein-L-isoaspartate O-methyltransferase 2 (219 aa).

Residue Ser67 is part of the active site.

The protein belongs to the methyltransferase superfamily. L-isoaspartyl/D-aspartyl protein methyltransferase family.

It localises to the cytoplasm. It catalyses the reaction [protein]-L-isoaspartate + S-adenosyl-L-methionine = [protein]-L-isoaspartate alpha-methyl ester + S-adenosyl-L-homocysteine. Functionally, catalyzes the methyl esterification of L-isoaspartyl residues in peptides and proteins that result from spontaneous decomposition of normal L-aspartyl and L-asparaginyl residues. It plays a role in the repair and/or degradation of damaged proteins. The chain is Protein-L-isoaspartate O-methyltransferase 2 from Nitrosococcus oceani (strain ATCC 19707 / BCRC 17464 / JCM 30415 / NCIMB 11848 / C-107).